The chain runs to 529 residues: ATP synthase F(1) complex catalytic subunit beta, mitochondrial (529 aa).

Residues 1–46 (MLSLVGRVASASASGALRGLSPSAALPQAQLLLRAAPAGVHPARDY) constitute a mitochondrion transit peptide. Residue Ser-106 is glycosylated (O-linked (GlcNAc) serine). An N6-acetyllysine; alternate mark is found at Lys-124, Lys-133, and Lys-161. Residues Lys-124, Lys-133, and Lys-161 each carry the N6-succinyllysine; alternate modification. Lys-198 is modified (N6-acetyllysine). ADP is bound by residues Gly-209, Val-210, Gly-211, Lys-212, Thr-213, and Val-214. Residue Gly-209 participates in ATP binding. The phosphate site is built by Gly-209, Val-210, Gly-211, Lys-212, and Thr-213. Residues Gly-211, Lys-212, Thr-213, and Val-214 each coordinate ATP. Thr-213 is a Mg(2+) binding site. Glu-238 is a Mg(2+) binding site. An ATP-binding site is contributed by Arg-239. N6-acetyllysine; alternate is present on residues Lys-259 and Lys-264. Residues Lys-259 and Lys-264 each carry the N6-succinyllysine; alternate modification. Thr-312 carries the post-translational modification Phosphothreonine. Lys-426 is subject to N6-acetyllysine. Ser-433 bears the Phosphoserine mark. An N6-acetyllysine mark is found at Lys-480 and Lys-485. At Lys-522 the chain carries N6-acetyllysine; alternate. The residue at position 522 (Lys-522) is an N6-succinyllysine; alternate. At Ser-529 the chain carries Phosphoserine.

Belongs to the ATPase alpha/beta chains family. Homotrimer. Component of the ATP synthase complex composed at least of ATP5F1A/subunit alpha, ATP5F1B/subunit beta, ATP5MC1/subunit c (homooctomer), MT-ATP6/subunit a, MT-ATP8/subunit 8, ATP5ME/subunit e, ATP5MF/subunit f, ATP5MG/subunit g, ATP5MK/subunit k, ATP5MJ/subunit j, ATP5F1C/subunit gamma, ATP5F1D/subunit delta, ATP5F1E/subunit epsilon, ATP5PF/subunit F6, ATP5PB/subunit b, ATP5PD/subunit d, ATP5PO/subunit OSCP. ATP synthase complex consists of a soluble F(1) head domain (subunits alpha(3) and beta(3)) - the catalytic core - and a membrane F(0) domain - the membrane proton channel (subunits c, a, 8, e, f, g, k and j). These two domains are linked by a central stalk (subunits gamma, delta, and epsilon) rotating inside the F1 region and a stationary peripheral stalk (subunits F6, b, d, and OSCP). Interacts with PPIF. Interacts with BCL2L1 isoform BCL-X(L); the interaction mediates the association of BCL2L1 isoform BCL-X(L) with the mitochondrial membrane F(1)F(0) ATP synthase and enhances neurons metabolic efficiency. Interacts with CLN5 and PPT1. Interacts with S100A1; this interaction increases F1-ATPase activity. Interacts with MTLN. Interacts with TTC5/STRAP; the interaction results in decreased mitochondrial ATP production. Post-translationally, acetylation of Lys-133 is observed in liver mitochondria from fasted mice but not from fed mice.

The protein resides in the mitochondrion inner membrane. The catalysed reaction is ATP + H2O + 4 H(+)(in) = ADP + phosphate + 5 H(+)(out). Catalytic subunit beta, of the mitochondrial membrane ATP synthase complex (F(1)F(0) ATP synthase or Complex V) that produces ATP from ADP in the presence of a proton gradient across the membrane which is generated by electron transport complexes of the respiratory chain. ATP synthase complex consist of a soluble F(1) head domain - the catalytic core - and a membrane F(1) domain - the membrane proton channel. These two domains are linked by a central stalk rotating inside the F(1) region and a stationary peripheral stalk. During catalysis, ATP synthesis in the catalytic domain of F(1) is coupled via a rotary mechanism of the central stalk subunits to proton translocation. In vivo, can only synthesize ATP although its ATP hydrolase activity can be activated artificially in vitro. With the subunit alpha (ATP5F1A), forms the catalytic core in the F(1) domain. This chain is ATP synthase F(1) complex catalytic subunit beta, mitochondrial, found in Mus musculus (Mouse).